A 364-amino-acid chain; its full sequence is FK506-binding protein 4 (364 aa).

Disordered stretches follow at residues Ser-92 to Ile-148 and Glu-168 to Pro-239. Residues Phe-94 to Ile-148 are compositionally biased toward acidic residues. Residues Glu-168–Val-184 show a composition bias toward basic and acidic residues. The span at Lys-185 to Pro-239 shows a compositional bias: low complexity. The PPIase FKBP-type domain maps to Gly-277 to Ala-363.

It belongs to the FKBP-type PPIase family. As to quaternary structure, binds to histones H3 and H4.

It localises to the nucleus. The catalysed reaction is [protein]-peptidylproline (omega=180) = [protein]-peptidylproline (omega=0). Its activity is regulated as follows. Inhibited by both FK506 and rapamycin. Its function is as follows. PPIase that acts as a histone chaperone. Histone proline isomerase that increases the rate of cis-trans isomerization at prolines on the histone H3 N-terminal tail. Proline isomerization influences H3 methylation thereby regulating gene expression. This chain is FK506-binding protein 4 (fkbp4), found in Dictyostelium discoideum (Social amoeba).